A 253-amino-acid polypeptide reads, in one-letter code: MKIIIAPAKIMKLDRDSFPVQSTPEFLKKTRILEKFLKSRTRDQLETLWHASDKVVEQSLFQLKNMDLDTNLTPAILAFSGIQYQYMAPDLFTQPALDYIQKNLRILSGFYGMLRPFDGICPYRLELNTKMVGFRDYSLYHFWDEDIANSLFKEDQVVINLASKQYMRLVKPYLNSARRMITVDFQELKNDKWKTVGVHAKMARGEMVRFMAEKQIKNPADLRDFHDFDFQFVPEVSSDDHYIFRTDFDFTRH.

This sequence belongs to the UPF0246 family.

The polypeptide is UPF0246 protein LBA1843 (Lactobacillus acidophilus (strain ATCC 700396 / NCK56 / N2 / NCFM)).